A 119-amino-acid polypeptide reads, in one-letter code: Platelet basic protein (119 aa).

Positions 1-33 (MSLRLGAISSCTTSSPFPVLQVLLPLSLLLTTL) are cleaved as a signal peptide. A propeptide spanning residues 34-39 (VPATMG) is cleaved from the precursor. Cystine bridges form between Cys-54–Cys-80 and Cys-56–Cys-96.

Its subcellular location is the secreted. Its function is as follows. Chemoattractant factor for neutrophils. This chain is Platelet basic protein (PPBP), found in Sus scrofa (Pig).